A 188-amino-acid polypeptide reads, in one-letter code: GMP synthase [glutamine-hydrolyzing] subunit A (188 aa).

One can recognise a Glutamine amidotransferase type-1 domain in the interval Lys-2 to Arg-188. Cys-79 acts as the Nucleophile in catalysis. Residues His-166 and Glu-168 contribute to the active site.

As to quaternary structure, heterodimer composed of a glutamine amidotransferase subunit (A) and a GMP-binding subunit (B).

The enzyme catalyses XMP + L-glutamine + ATP + H2O = GMP + L-glutamate + AMP + diphosphate + 2 H(+). Its pathway is purine metabolism; GMP biosynthesis; GMP from XMP (L-Gln route): step 1/1. Its function is as follows. Catalyzes the synthesis of GMP from XMP. The polypeptide is GMP synthase [glutamine-hydrolyzing] subunit A (Picrophilus torridus (strain ATCC 700027 / DSM 9790 / JCM 10055 / NBRC 100828 / KAW 2/3)).